Here is a 290-residue protein sequence, read N- to C-terminus: Lectin-related protein (290 aa).

A signal peptide spans 1–36 (ANSNSRPHLLQTQKPFSVVLAISITFYLLLLNKVNS). Residues Asn-119, Asn-147, and Asn-152 are each glycosylated (N-linked (GlcNAc...) asparagine). Residues Glu-161 and Asp-163 each contribute to the Mn(2+) site. Ca(2+)-binding residues include Asp-163, Asn-167, and Asp-170. Positions 170 and 175 each coordinate Mn(2+).

The protein belongs to the leguminous lectin family. In terms of assembly, homotetramer.

Does not have any carbohydrate binding or agglutination activity. This is Lectin-related protein from Cladrastis kentukea (Yellow wood).